The chain runs to 210 residues: RNA chaperone ProQ (210 aa).

The span at 98 to 127 shows a compositional bias: basic and acidic residues; the sequence is HAKASLEESKAKVAARRKEQAKKAREEAKA. The segment at 98-155 is disordered; that stretch reads HAKASLEESKAKVAARRKEQAKKAREEAKAKKPARATTPPKRRPQPAAVAKKQEKPVE.

Belongs to the ProQ family.

It localises to the cytoplasm. RNA chaperone with significant RNA binding, RNA strand exchange and RNA duplexing activities. In Aliivibrio salmonicida (strain LFI1238) (Vibrio salmonicida (strain LFI1238)), this protein is RNA chaperone ProQ.